A 222-amino-acid polypeptide reads, in one-letter code: METIDAEDAACLRRIALLGGCKGPVRLSTQALGDQLGISQQTASRRLQSLEKAQMISRTAESTGQYVLVTRSGEEHLRREFAEYAKIFDVKDEQYVLTGTVMSGVGEGRYYMSIPHYQEQFEKLCGFTPYPGTLNIKLNPQSVLIRKRMDSLEWTIVPGFKDEHRMFGEARCIKCTISGIPCAIVVPGRTHHPEEVIEVISGTQLRDALDLTENSEVVVVIG.

The tract at residues 1 to 94 (METIDAEDAA…AKIFDVKDEQ (94 aa)) is H-T-H motif-like. A riboflavin kinase region spans residues 95–222 (YVLTGTVMSG…ENSEVVVVIG (128 aa)). 104-109 (GVGEGR) serves as a coordination point for CDP. Positions 133 and 135 each coordinate Mg(2+). FMN is bound by residues Thr-190 and Glu-198. Residue 203–206 (TQLR) coordinates CDP.

Belongs to the archaeal riboflavin kinase family. Requires Mg(2+) as cofactor.

It catalyses the reaction riboflavin + CTP = CDP + FMN + H(+). Its pathway is cofactor biosynthesis; FMN biosynthesis; FMN from riboflavin (CTP route): step 1/1. Its function is as follows. Catalyzes the CTP-dependent phosphorylation of riboflavin (vitamin B2) to form flavin mononucleotide (FMN). The protein is Riboflavin kinase (ribK) of Methanocorpusculum labreanum (strain ATCC 43576 / DSM 4855 / Z).